The following is a 549-amino-acid chain: Peptide transport periplasmic protein SapA (549 aa).

A signal peptide spans Met-1–Ala-21.

It belongs to the bacterial solute-binding protein 5 family.

It localises to the periplasm. In terms of biological role, involved in a peptide intake transport system that plays a role in the resistance to antimicrobial peptides. This chain is Peptide transport periplasmic protein SapA, found in Salmonella typhimurium (strain LT2 / SGSC1412 / ATCC 700720).